The sequence spans 177 residues: Mitochondrial inner membrane protease subunit 2 (177 aa).

Residues 19–37 (FFVAVPVAVTFLDRVACVA) form a helical membrane-spanning segment. Residues S43 and K91 contribute to the active site.

Belongs to the peptidase S26 family. IMP2 subfamily. As to quaternary structure, heterodimer of 2 subunits, IMMPL1 and IMMPL2.

The protein localises to the mitochondrion inner membrane. Its function is as follows. Catalyzes the removal of transit peptides required for the targeting of proteins from the mitochondrial matrix, across the inner membrane, into the inter-membrane space. Known to process the nuclear encoded protein DIABLO. This chain is Mitochondrial inner membrane protease subunit 2 (IMMP2L), found in Bos taurus (Bovine).